Here is a 154-residue protein sequence, read N- to C-terminus: Lipoprotein signal peptidase (154 aa).

4 consecutive transmembrane segments (helical) span residues 8–28, 36–56, 66–86, and 88–108; these read AFFLISVACFLADYYSKYWAL, IVVNTYMNFILAFNHGAAFSF, WLFAGFAGIVALWLIMTLLTK, and HHWLMSVSYACILGGAVGNLY. Catalysis depends on residues D118 and D136. A helical membrane pass occupies residues 129 to 149; sequence WPVFNLADVAITLGVILMLIA.

It belongs to the peptidase A8 family.

Its subcellular location is the cell inner membrane. It catalyses the reaction Release of signal peptides from bacterial membrane prolipoproteins. Hydrolyzes -Xaa-Yaa-Zaa-|-(S,diacylglyceryl)Cys-, in which Xaa is hydrophobic (preferably Leu), and Yaa (Ala or Ser) and Zaa (Gly or Ala) have small, neutral side chains.. It participates in protein modification; lipoprotein biosynthesis (signal peptide cleavage). Functionally, this protein specifically catalyzes the removal of signal peptides from prolipoproteins. The chain is Lipoprotein signal peptidase from Dichelobacter nodosus (strain VCS1703A).